Reading from the N-terminus, the 63-residue chain is Large ribosomal subunit protein bL35 (63 aa).

The segment at 1–22 (MPKMKTKSGATKRFKKTATGFK) is disordered.

The protein belongs to the bacterial ribosomal protein bL35 family.

The chain is Large ribosomal subunit protein bL35 from Marinobacter nauticus (strain ATCC 700491 / DSM 11845 / VT8) (Marinobacter aquaeolei).